Consider the following 224-residue polypeptide: UPF0502 protein Psyr_2419 (224 aa).

The protein belongs to the UPF0502 family.

The chain is UPF0502 protein Psyr_2419 from Pseudomonas syringae pv. syringae (strain B728a).